The primary structure comprises 140 residues: uncharacterized protein (140 aa).

The interval 62-140 (TEARAGRGGP…PQGRWGPSLG (79 aa)) is disordered. Over residues 71-94 (PATARSRVSADSQGGRAGSSSPSS) the composition is skewed to low complexity.

This is an uncharacterized protein from Homo sapiens (Human).